A 516-amino-acid polypeptide reads, in one-letter code: Golgin-84 (516 aa).

Residues 1 to 492 (MSSWITGLAD…TFLRRYPMMR (492 aa)) are Cytoplasmic-facing. Residues 28–80 (QTENATGSADPMRRSMTSSTQSLSTSLKSTLSPVRRSGANSSSSVKSDGGVSV) are disordered. Over residues 42 to 80 (SMTSSTQSLSTSLKSTLSPVRRSGANSSSSVKSDGGVSV) the composition is skewed to low complexity. Residues Ser-64 and Ser-74 each carry the phosphoserine modification. Positions 108–423 (TNELAAFKIA…KAQTQLQQNM (316 aa)) form a coiled coil. Residues 493–513 (VSVIVYVALLHLWVMFVLLST) form a helical; Anchor for type IV membrane protein membrane-spanning segment. The Lumenal segment spans residues 514 to 516 (TPN).

The protein localises to the golgi apparatus membrane. In terms of biological role, may be involved in maintaining Golgi structure and in intra-Golgi transport. In Drosophila melanogaster (Fruit fly), this protein is Golgin-84 (Golgin84).